We begin with the raw amino-acid sequence, 273 residues long: DnaJ homolog subfamily C member 27 (273 aa).

A required for interaction with MAPK1 region spans residues 1 to 18 (MEANMPKRKEPGRSLRIK). Residues 23–30 (GNAEVGKS), 71–75 (DMAGH), and 134–137 (NKID) each bind GTP. Residues 217–273 (GSWDMLGVKPGASRDEVNKACRKLAVLLHPDKCVAPGSEDAFKAVVNARTALLKNIK) form the J domain.

Belongs to the small GTPase superfamily. Rab family. As to quaternary structure, interacts directly with MAPK1 (wild-type and kinase-deficient forms). Interacts directly (in GTP-bound form) with MAP2K1 (wild-type and kinase-deficient forms).

It is found in the nucleus. Its function is as follows. GTPase which can activate the MEK/ERK pathway and induce cell transformation when overexpressed. May act as a nuclear scaffold for MAPK1, probably by association with MAPK1 nuclear export signal leading to enhanced ERK1/ERK2 signaling. The polypeptide is DnaJ homolog subfamily C member 27 (DNAJC27) (Pongo abelii (Sumatran orangutan)).